The sequence spans 205 residues: Large ribosomal subunit protein uL4 (205 aa).

A disordered region spans residues 43-95 (RSGNRAQKDRAEVKHSTKKPWRQKGTGRARAGMTSSPLWRGGGRAFPNSPEEN). Residues 48-57 (AQKDRAEVKH) show a composition bias toward basic and acidic residues. Residues 58–69 (STKKPWRQKGTG) show a composition bias toward basic residues.

It belongs to the universal ribosomal protein uL4 family. As to quaternary structure, part of the 50S ribosomal subunit.

One of the primary rRNA binding proteins, this protein initially binds near the 5'-end of the 23S rRNA. It is important during the early stages of 50S assembly. It makes multiple contacts with different domains of the 23S rRNA in the assembled 50S subunit and ribosome. In terms of biological role, forms part of the polypeptide exit tunnel. The sequence is that of Large ribosomal subunit protein uL4 from Bordetella pertussis (strain Tohama I / ATCC BAA-589 / NCTC 13251).